A 47-amino-acid chain; its full sequence is Conotoxin Cal6.18 (47 aa).

The N-terminal stretch at 1–19 (MKLTYVLIVAMLVLVVCRA) is a signal peptide.

The protein belongs to the conotoxin O1 superfamily. Post-translationally, may contain 3 disulfide bonds. As to expression, expressed by the venom duct.

It localises to the secreted. Probable neurotoxin. The chain is Conotoxin Cal6.18 from Californiconus californicus (California cone).